The primary structure comprises 195 residues: SPI-2 type 3 secretion system translocon protein SctB (195 aa).

The stretch at K44 to K80 forms a coiled coil. 3 helical membrane-spanning segments follow: residues M90–G110, L115–V135, and E170–L190.

This sequence belongs to the SctB/EspB family. In terms of assembly, the core secretion machinery of the T3SS is composed of approximately 20 different proteins, including cytoplasmic components, a base, an export apparatus and a needle. This subunit is involved in the formation of a pore, called the translocon, in host membrane. May form a complex with SseB and SseC/SctE2. SseB is required for correct localization of SseD/SctB2 on the bacterial cell surface. Binds to the chaperone SseA.

The protein resides in the secreted. It localises to the cell surface. Its subcellular location is the host membrane. Component of the type III secretion system 2 (SPI-2 T3SS), also called injectisome, which is used to inject bacterial effector proteins into eukaryotic host cells. SseC/SctE2 and SseD/SctB2 are inserted into the host membrane where they form a pore and allow the translocation of effector proteins into the cytosol of target cells. Its function is as follows. Required for the translocation of SPI-2 effector proteins. Required for systemic Salmonella infection of the mouse. Essential for SpvB-induced actin depolymerization in the host cell cytoplasm. The chain is SPI-2 type 3 secretion system translocon protein SctB from Salmonella typhimurium (strain LT2 / SGSC1412 / ATCC 700720).